The following is a 277-amino-acid chain: Probable endonuclease 4 (277 aa).

H70, H108, E143, D176, H179, H210, D223, H225, and E255 together coordinate Zn(2+).

Belongs to the AP endonuclease 2 family. The cofactor is Zn(2+).

It catalyses the reaction Endonucleolytic cleavage to 5'-phosphooligonucleotide end-products.. Functionally, endonuclease IV plays a role in DNA repair. It cleaves phosphodiester bonds at apurinic or apyrimidinic (AP) sites, generating a 3'-hydroxyl group and a 5'-terminal sugar phosphate. The sequence is that of Probable endonuclease 4 from Mycoplasmopsis synoviae (strain 53) (Mycoplasma synoviae).